Consider the following 151-residue polypeptide: UPF0178 protein Desal_2673 (151 aa).

It belongs to the UPF0178 family.

This Maridesulfovibrio salexigens (strain ATCC 14822 / DSM 2638 / NCIMB 8403 / VKM B-1763) (Desulfovibrio salexigens) protein is UPF0178 protein Desal_2673.